The following is a 759-amino-acid chain: Solute carrier family 26 member 6 (759 aa).

Residues 1–115 (MGLADASGPR…PQGLAYALLA (115 aa)) are Cytoplasmic-facing. A helical membrane pass occupies residues 116–136 (GLPPVFGLYSSFYPVFIYFLF). Residues 137-186 (GTSRHISVGTFAVMSVMVGSVTESLAPQALNDSMINETARDAARVQVAST) are Extracellular-facing. Asn-167 and Asn-172 each carry an N-linked (GlcNAc) asparagine glycan. Residues 187 to 207 (LSVLVGLFQVGLGLIHFGFVV) form a helical membrane-spanning segment. At 208–263 (TYLSEPLVRGYTTAAAVQVFVSQLKYVFGLHLSSHSGPLSLIYTVLEVCWKLPQSK) the chain is on the cytoplasmic side. The chain crosses the membrane as a helical span at residues 264–284 (VGTVVTAAVAGVVLVVVKLLN). Residues 285 to 293 (DKLQQQLPM) lie on the Extracellular side of the membrane. Residues 294–314 (PIPGELLTLIGATGISYGMGL) traverse the membrane as a helical segment. Topologically, residues 315–347 (KHRFEVDVVGNIPAGLVPPVAPNTQLFSKLVGS) are cytoplasmic. The helical transmembrane segment at 348-368 (AFTIAVVGFAIAISLGKIFAL) threads the bilayer. Residues 369-379 (RHGYRVDSNQE) lie on the Extracellular side of the membrane. The helical transmembrane segment at 380–400 (LVALGLSNLIGGIFQCFPVSC) threads the bilayer. The Cytoplasmic portion of the chain corresponds to 401–416 (SMSRSLVQESTGGNSQ). Residues 417–437 (VAGAISSLFILLIIVKLGELF) form a helical membrane-spanning segment. The Extracellular segment spans residues 438–484 (HDLPKAVLAAIIIVNLKGMLRQLSDMRSLWKANRADLLIWLVTFTAT). Residues 485-505 (ILLNLDLGLVVAVIFSLLLVV) traverse the membrane as a helical segment. Topologically, residues 506 to 759 (VRTQMPHYSV…PDSPVSVTRL (254 aa)) are cytoplasmic. Residues 530-742 (EYSEAKEVRG…ASVHDAVTFA (213 aa)) enclose the STAS domain. Phosphoserine; by PKC occurs at positions 553 and 582. Ser-616 bears the Phosphoserine mark. The disordered stretch occupies residues 636 to 657 (GDKMEDATANGQEDSKAPDGST). Phosphoserine occurs at positions 752 and 755.

This sequence belongs to the SLC26A/SulP transporter (TC 2.A.53) family. In terms of assembly, interacts (via C-terminal domain) with PDZK1 (via C-terminal PDZ domain); the interaction induces chloride and oxalate exchange transport. Interacts with CFTR and SLC26A3. Interacts with AHCYL1; the interaction increases SLC26A6 activity. Interacts with NHERF1 (via the PDZ domains) and NHERF2 (via the PDZ domains). Interacts (via C-terminal cytoplasmic domain) with CA2; the interaction stimulates chloride-bicarbonate exchange activity. As to quaternary structure, interacts with NHERF1 (via the PDZ domains) and NHERF2 (via the PDZ domains). Post-translationally, phosphorylated on serine residues by PKC; the phosphorylation disrupts interaction with carbonic anhydrase CA2 and reduces bicarbonate transport activity in a phorbol myristate acetate (PMA)-induced manner. In terms of processing, glycosylation at Asn-167 and Asn-172 positively regulates its chloride oxalate exchanger activity. In terms of tissue distribution, ubiquitous. Highest levels in kidney and pancreas. Lower expression in heart, skeletal muscle, liver and placenta. Also found in lung and brain. Ubiquitously expressed. Highest levels expressed in the kidney and pancreas. As to expression, expressed weakly in placenta, lung, liver and pancreas. In terms of tissue distribution, expressed in heart, brain, placenta, lung, liver, kidney, pancreas, spleen, thymus, prostate, testis and ovary.

The protein resides in the cell membrane. It is found in the apical cell membrane. The protein localises to the cytoplasmic vesicle membrane. Its subcellular location is the microsome. It localises to the basolateral cell membrane. It carries out the reaction 2 hydrogencarbonate(in) + chloride(out) = 2 hydrogencarbonate(out) + chloride(in). The enzyme catalyses oxalate(in) + chloride(out) = oxalate(out) + chloride(in). It catalyses the reaction oxalate(in) + formate(out) = oxalate(out) + formate(in). The catalysed reaction is oxalate(in) + sulfate(out) = oxalate(out) + sulfate(in). It carries out the reaction 2 hydrogencarbonate(out) + sulfate(in) = 2 hydrogencarbonate(in) + sulfate(out). Its activity is regulated as follows. Oxalate transport activity is inhibited by 4,4'-diisothiocyanatostilbene-2,2'-disulfonic acid (DIDS). With respect to regulation, chloride, bicarbonate and sulfate transport activities are inhibited by 4,4'-diisothiocyanatostilbene-2,2'-disulfonic acid (DIDS). In terms of biological role, apical membrane anion-exchanger with wide epithelial distribution that plays a role as a component of the pH buffering system for maintaining acid-base homeostasis. Acts as a versatile DIDS-sensitive inorganic and organic anion transporter that mediates the uptake of monovalent anions like chloride, bicarbonate, formate and hydroxyl ion and divalent anions like sulfate and oxalate. Functions in multiple exchange modes involving pairs of these anions, which include chloride-bicarbonate, chloride-oxalate, oxalate-formate, oxalate-sulfate and chloride-formate exchange. Apical membrane chloride-bicarbonate exchanger that mediates luminal chloride absorption and bicarbonate secretion by the small intestinal brush border membrane and contributes to intracellular pH regulation in the duodenal upper villous epithelium during proton-coupled peptide absorption, possibly by providing a bicarbonate import pathway. Also mediates intestinal chloride absorption and oxalate secretion, thereby preventing hyperoxaluria and calcium oxalate urolithiasis. Transepithelial oxalate secretion, chloride-formate, chloride-oxalate and chloride-bicarbonate transport activities in the duodenum are inhibited by PKC activation in a calcium-independent manner. The apical membrane chloride-bicarbonate exchanger also provides a major route for fluid and bicarbonate secretion into the proximal tubules of the kidney as well as into the proximal part of the interlobular pancreatic ductal tree, where it mediates electrogenic chloride-bicarbonate exchange with a chloride-bicarbonate stoichiometry of 1:2, and hence will dilute and alkalinize protein-rich acinar secretion. Also mediates the transcellular sulfate absorption and oxalate secretion across the apical membrane in the duodenum and the formate ion efflux at the apical brush border of cells in the proximal tubules of kidney. Plays a role in sperm capacitation by increasing intracellular pH. Its function is as follows. Apical membrane chloride-bicarbonate exchanger. Its association with carbonic anhydrase CA2 forms a bicarbonate transport metabolon; hence maximizes the local concentration of bicarbonate at the transporter site. This chain is Solute carrier family 26 member 6 (SLC26A6), found in Homo sapiens (Human).